We begin with the raw amino-acid sequence, 663 residues long: Cyclic nucleotide-gated channel alpha-2 (663 aa).

The segment at 1-61 (MTEKANGVKS…QLAEMDAPQQ (61 aa)) is disordered. Residues 1 to 144 (MTEKANGVKS…PAGDWYYRWL (144 aa)) are Cytoplasmic-facing. Low complexity predominate over residues 12–23 (PANNHNHHAPPA). A helical membrane pass occupies residues 145 to 166 (FLIALPVLYNWCLLVARACFSD). The Extracellular portion of the chain corresponds to 167–176 (LQKGYYIVWL). Residues 177–197 (VLDYVSDVVYIADLFIRLRTG) form a helical membrane-spanning segment. Residues 198–222 (FLEQGLLVKDTKKLRDNYIHTMQFK) lie on the Cytoplasmic side of the membrane. Residues 223–241 (LDVASIIPTDLIYFAVGIH) form a helical membrane-spanning segment. The Extracellular segment spans residues 242 to 246 (NPEVR). A helical transmembrane segment spans residues 247-265 (FNRLLHFARMFEFFDRTET). Residues 266–272 (RTSYPNI) are Cytoplasmic-facing. The segment at 270–378 (PNIFRISNLI…GNVGSMISNM (109 aa)) is ion conduction pathway. The helical transmembrane segment at 273–296 (FRISNLILYILIIIHWNACIYYAI) threads the bilayer. The Extracellular portion of the chain corresponds to 297-319 (SKSIGFGVDTWVYPNITDPEYGY). 2 consecutive transmembrane segments (helical) span residues 320-354 (LSRE…LFVI) and 355-379 (FDFL…SNMN). A selectivity filter region spans residues 337–340 (TIGE). The tract at residues 380–456 (ATRAEFQAKI…STLKKVRIFQ (77 aa)) is C-linker. At 380 to 663 (ATRAEFQAKI…NSPEPPAEKP (284 aa)) the chain is on the cytoplasmic side. The segment at 460 to 580 (AGLLVELVLK…EERGREILMK (121 aa)) is cyclic nucleotide-binding domain. 3',5'-cyclic GMP contacts are provided by G520, S523, R536, and T537. 3',5'-cyclic AMP-binding residues include R536 and T537. The stretch at 597 to 651 (VQEKLEQLETNMDTLYTRFARLLAEYTGAQQKLKQRITVLETKMKQNNEDDSLSD) forms a coiled coil. Residues 640 to 663 (MKQNNEDDSLSDGMNSPEPPAEKP) form a disordered region.

The protein belongs to the cyclic nucleotide-gated cation channel (TC 1.A.1.5) family. CNGA2 subfamily. In terms of assembly, the olfactory cyclic nucleotide-gated channel is an heterotetramer composed of CNGA2, CNGA4 and CNGB1b subunits with 2:1:1 stoichiometry. Olfactory neurons.

Its subcellular location is the cell projection. The protein localises to the cilium membrane. The enzyme catalyses Ca(2+)(in) = Ca(2+)(out). It catalyses the reaction Na(+)(in) = Na(+)(out). The catalysed reaction is K(+)(in) = K(+)(out). It carries out the reaction NH4(+)(in) = NH4(+)(out). The enzyme catalyses Rb(+)(in) = Rb(+)(out). It catalyses the reaction Li(+)(in) = Li(+)(out). The catalysed reaction is Cs(+)(in) = Cs(+)(out). In terms of biological role, pore-forming subunit of the olfactory cyclic nucleotide-gated channel. Operates in the cilia of olfactory sensory neurons where chemical stimulation of the odorant is converted to an electrical signal. Mediates odorant-induced cAMP-dependent Ca(2+) influx triggering neuron depolarization. The rise of intracellular Ca(2+) levels potentiates the olfactory response by activating Ca(2+)-dependent Cl(-) channels, but it also serves as a negative feedback signal to desensitize the channel for rapid adaptation to odorants. Conducts cAMP- and cGMP-gated ion currents, with permeability for monovalent and divalent cations. This Bos taurus (Bovine) protein is Cyclic nucleotide-gated channel alpha-2.